Here is a 713-residue protein sequence, read N- to C-terminus: TWiK family of potassium channels protein 12 (713 aa).

At 1-15 (MTLFKKIQWFCNLIR) the chain is on the cytoplasmic side. Residues 16 to 36 (LRSYYKFLLLIAYTAFGAWLF) form a helical membrane-spanning segment. Residues Asn53, Asn77, and Asn98 are each glycosylated (N-linked (GlcNAc...) asparagine). An intramembrane region (pore-forming) is located at residues 112-132 (WTWTGAMFYAGQLYTTIGYGY). The chain crosses the membrane as a helical span at residues 142–162 (ICTIFYALFGIPCFLMYLKIE). Residues 163–242 (NAIEWKKDKQ…AEERKKKPFP (80 aa)) are Cytoplasmic-facing. The chain crosses the membrane as a helical span at residues 243 to 263 (IPIAIIMLIIWICFSASMFCI). An intramembrane region (pore-forming) is located at residues 267-287 (TWVFSSAVYFFIVSISTVGLG). The chain crosses the membrane as a helical span at residues 298–318 (VFNFLLILVGLALLSMCFELI). Over 319 to 713 (TDRVAKWKQK…LSKRDASTMA (395 aa)) the chain is Cytoplasmic.

It belongs to the two pore domain potassium channel (TC 1.A.1.8) family.

Its subcellular location is the membrane. The sequence is that of TWiK family of potassium channels protein 12 (twk-12) from Caenorhabditis elegans.